Reading from the N-terminus, the 416-residue chain is Transcription factor PIL1 (416 aa).

Disordered stretches follow at residues 1–24, 89–113, and 197–231; these read MEAKPLASSSSEPNMISPSSNIKP, VSQSKPQQDKETNEQMNNNKKKLKS, and ESTYLSNNSDDESDDAKTQVHARTRKPVTKRKRST. Residues 8 to 22 show a composition bias toward low complexity; that stretch reads SSSSEPNMISPSSNI. The stretch at 95-124 forms a coiled coil; the sequence is QQDKETNEQMNNNKKKLKSSKIEFERNVSK. Basic residues predominate over residues 216–229; sequence VHARTRKPVTKRKR. One can recognise a bHLH domain in the interval 229 to 278; it reads RSTEVHKLYERKRRDEFNKKMRALQDLLPNCYKDDKASLLDEAIKYMRTL.

Homodimer. Interacts with APRR1/TOC1. Associates to PTAC12/HMR/PAP5 which acts as a transcriptional coactivator. As to expression, mainly expressed in stems, fruits and flowers and, to a lower extent, in leaves, seedlings and roots. Accumulates in etiolated seedlings.

The protein localises to the nucleus. Transcription factor. Involved in responses to transient and long-term shade. Required for the light-mediated inhibition of hypocotyl elongation. Necessary for rapid light-induced expression of the photomorphogenesis- and circadian-related gene APRR9. Seems to play a role in multiple PHYB responses, such as flowering transition and petiole elongation. The protein is Transcription factor PIL1 of Arabidopsis thaliana (Mouse-ear cress).